A 170-amino-acid chain; its full sequence is Peptide methionine sulfoxide reductase MsrA (170 aa).

Residue Cys14 is part of the active site.

This sequence belongs to the MsrA Met sulfoxide reductase family.

The enzyme catalyses L-methionyl-[protein] + [thioredoxin]-disulfide + H2O = L-methionyl-(S)-S-oxide-[protein] + [thioredoxin]-dithiol. It carries out the reaction [thioredoxin]-disulfide + L-methionine + H2O = L-methionine (S)-S-oxide + [thioredoxin]-dithiol. Its function is as follows. Has an important function as a repair enzyme for proteins that have been inactivated by oxidation. Catalyzes the reversible oxidation-reduction of methionine sulfoxide in proteins to methionine. The sequence is that of Peptide methionine sulfoxide reductase MsrA from Streptomyces avermitilis (strain ATCC 31267 / DSM 46492 / JCM 5070 / NBRC 14893 / NCIMB 12804 / NRRL 8165 / MA-4680).